Here is a 446-residue protein sequence, read N- to C-terminus: tRNA-2-methylthio-N(6)-dimethylallyladenosine synthase (446 aa).

Residues 2–122 enclose the MTTase N-terminal domain; the sequence is KKAYVKSYGC…LPDLLRQSRE (121 aa). Residues Cys11, Cys47, Cys85, Cys157, Cys161, and Cys164 each coordinate [4Fe-4S] cluster. The 233-residue stretch at 143-375 folds into the Radical SAM core domain; sequence RNRGVTGFLT…QQLLDQQRHA (233 aa). Residues 378-440 enclose the TRAM domain; the sequence is AAAVGTVAEI…SNSLFGEVLE (63 aa).

The protein belongs to the methylthiotransferase family. MiaB subfamily. Monomer. It depends on [4Fe-4S] cluster as a cofactor.

Its subcellular location is the cytoplasm. The catalysed reaction is N(6)-dimethylallyladenosine(37) in tRNA + (sulfur carrier)-SH + AH2 + 2 S-adenosyl-L-methionine = 2-methylsulfanyl-N(6)-dimethylallyladenosine(37) in tRNA + (sulfur carrier)-H + 5'-deoxyadenosine + L-methionine + A + S-adenosyl-L-homocysteine + 2 H(+). In terms of biological role, catalyzes the methylthiolation of N6-(dimethylallyl)adenosine (i(6)A), leading to the formation of 2-methylthio-N6-(dimethylallyl)adenosine (ms(2)i(6)A) at position 37 in tRNAs that read codons beginning with uridine. In Methylorubrum populi (strain ATCC BAA-705 / NCIMB 13946 / BJ001) (Methylobacterium populi), this protein is tRNA-2-methylthio-N(6)-dimethylallyladenosine synthase.